A 434-amino-acid polypeptide reads, in one-letter code: Glutamyl-tRNA reductase (434 aa).

Substrate-binding positions include 49 to 52 (TCNR), S109, 114 to 116 (EPQ), and Q120. C50 serves as the catalytic Nucleophile. An NADP(+)-binding site is contributed by 189-194 (GAGEMA).

It belongs to the glutamyl-tRNA reductase family. Homodimer.

It carries out the reaction (S)-4-amino-5-oxopentanoate + tRNA(Glu) + NADP(+) = L-glutamyl-tRNA(Glu) + NADPH + H(+). The protein operates within porphyrin-containing compound metabolism; protoporphyrin-IX biosynthesis; 5-aminolevulinate from L-glutamyl-tRNA(Glu): step 1/2. Functionally, catalyzes the NADPH-dependent reduction of glutamyl-tRNA(Glu) to glutamate 1-semialdehyde (GSA). This Desulfatibacillum aliphaticivorans protein is Glutamyl-tRNA reductase.